The chain runs to 114 residues: Protein ELF4-LIKE 4 (114 aa).

Residues 87–114 (SVDASSEGESSGTLKSDGKANQKRFRSG) are disordered. Residues 89 to 100 (DASSEGESSGTL) show a composition bias toward polar residues.

The protein belongs to the EARLY FLOWERING 4 family. In terms of assembly, homodimer.

The protein resides in the nucleus. In terms of biological role, component of the central CCA1/LHY-TOC1 feedback loop in the circadian clock that promotes clock accuracy and is required for sustained rhythms in the absence of daily light/dark cycles. This Arabidopsis thaliana (Mouse-ear cress) protein is Protein ELF4-LIKE 4 (EFL4).